A 333-amino-acid polypeptide reads, in one-letter code: Probable G-protein coupled receptor 33 (333 aa).

Topologically, residues 1–30 are extracellular; sequence MDLINSTDYLINASTLVRNSTQFLAPASKM. Residues N5, N12, and N19 are each glycosylated (N-linked (GlcNAc...) asparagine). The chain crosses the membrane as a helical span at residues 31 to 53; the sequence is IIALSLYISSIIGTITNGLYLWV. Over 54–64 the chain is Cytoplasmic; that stretch reads LRFKMKQTVNT. The helical transmembrane segment at 65–86 threads the bilayer; the sequence is LLFFHLILSYFISTMILPFMAT. Topologically, residues 87-103 are extracellular; the sequence is SQLQDNHWNFGTALCKV. An intrachain disulfide couples C101 to C179. A helical transmembrane segment spans residues 104 to 124; the sequence is FNGTLSLGMFTSVFFLSAIGL. At 125–143 the chain is on the cytoplasmic side; sequence DRYLLTLHPVWSQQHRTPR. The chain crosses the membrane as a helical span at residues 144–165; it reads WASSIVLGVWISAAALSIPYLI. At 166 to 209 the chain is on the extracellular side; that stretch reads FRQTHHDRKGKVTCQNNYAVSTNWESKEMQALRQWIHVACFISR. A helical membrane pass occupies residues 210–230; the sequence is FLLGFLLPFFIIIFCYERVAS. Residues 231 to 246 are Cytoplasmic-facing; it reads KVKERSLFKSSKPFKV. Residues 247–268 traverse the membrane as a helical segment; that stretch reads MMTAIISFFVCWMPYHIHQGLL. Topologically, residues 269-283 are extracellular; the sequence is LTTNQSLLLELTLIL. An N-linked (GlcNAc...) asparagine glycan is attached at N272. Residues 284 to 303 form a helical membrane-spanning segment; sequence TVLTTSFNTIFSPTLYLFVG. At 304-333 the chain is on the cytoplasmic side; it reads ENFKKVFKKSILALFESTFSEDSSVERTQT.

The protein belongs to the G-protein coupled receptor 1 family.

The protein resides in the cell membrane. Functionally, orphan receptor; could be a chemoattractant receptor. This is Probable G-protein coupled receptor 33 (GPR33) from Pan troglodytes (Chimpanzee).